The chain runs to 40 residues: U1-ectatotoxin-Eb1a subunit A (40 aa).

It belongs to the ectatomin family. Ectatomin-Eq subfamily. In terms of assembly, heterodimer of subunits A and B; disulfide-linked. In terms of tissue distribution, expressed by the venom gland.

Its subcellular location is the secreted. It localises to the target cell membrane. This Ectatomma brunneum (Ant) protein is U1-ectatotoxin-Eb1a subunit A.